The primary structure comprises 258 residues: D-beta-hydroxybutyrate dehydrogenase (258 aa).

Residue 6–30 (VITGSTSGIGLAIARTLAKAGANIV) participates in NAD(+) binding. Substrate is bound at residue S140. Y153 acts as the Proton acceptor in catalysis.

This sequence belongs to the short-chain dehydrogenases/reductases (SDR) family.

It catalyses the reaction (R)-3-hydroxybutanoate + NAD(+) = acetoacetate + NADH + H(+). The sequence is that of D-beta-hydroxybutyrate dehydrogenase (bdhA) from Rhizobium meliloti (strain 1021) (Ensifer meliloti).